A 61-amino-acid polypeptide reads, in one-letter code: Large ribosomal subunit protein eL37 (61 aa).

Positions 19, 22, 34, and 37 each coordinate Zn(2+). The C4-type zinc-finger motif lies at 19 to 37; it reads CRRCGRNAYNVSKHYCAAC.

It belongs to the eukaryotic ribosomal protein eL37 family. Zn(2+) is required as a cofactor.

Functionally, binds to the 23S rRNA. The polypeptide is Large ribosomal subunit protein eL37 (Saccharolobus islandicus (strain L.S.2.15 / Lassen #1) (Sulfolobus islandicus)).